Reading from the N-terminus, the 539-residue chain is Glucans biosynthesis protein D (539 aa).

Residues 1 to 29 (MNRRNLLKASMALAAYGSVSASGLYAARA) constitute a signal peptide (tat-type signal).

This sequence belongs to the OpgD/OpgG family. Predicted to be exported by the Tat system. The position of the signal peptide cleavage has not been experimentally proven.

It is found in the periplasm. It functions in the pathway glycan metabolism; osmoregulated periplasmic glucan (OPG) biosynthesis. Functionally, probably involved in the control of the structural glucose backbone of osmoregulated periplasmic glucans (OPGs). In Pseudomonas savastanoi pv. phaseolicola (strain 1448A / Race 6) (Pseudomonas syringae pv. phaseolicola (strain 1448A / Race 6)), this protein is Glucans biosynthesis protein D.